The sequence spans 471 residues: ATP synthase subunit beta (471 aa).

Residue glycine 156 to threonine 163 participates in ATP binding.

Belongs to the ATPase alpha/beta chains family. As to quaternary structure, F-type ATPases have 2 components, CF(1) - the catalytic core - and CF(0) - the membrane proton channel. CF(1) has five subunits: alpha(3), beta(3), gamma(1), delta(1), epsilon(1). CF(0) has three main subunits: a(1), b(2) and c(9-12). The alpha and beta chains form an alternating ring which encloses part of the gamma chain. CF(1) is attached to CF(0) by a central stalk formed by the gamma and epsilon chains, while a peripheral stalk is formed by the delta and b chains.

It localises to the cell inner membrane. The catalysed reaction is ATP + H2O + 4 H(+)(in) = ADP + phosphate + 5 H(+)(out). Functionally, produces ATP from ADP in the presence of a proton gradient across the membrane. The catalytic sites are hosted primarily by the beta subunits. In Nitratidesulfovibrio vulgaris (strain DSM 19637 / Miyazaki F) (Desulfovibrio vulgaris), this protein is ATP synthase subunit beta.